Consider the following 23-residue polypeptide: Basic phospholipase A2 mangshantoxin (23 aa).

It belongs to the phospholipase A2 family. Group II subfamily. Ca(2+) is required as a cofactor. In terms of processing, contains 7 disulfide bonds. In terms of tissue distribution, expressed by the venom gland.

It localises to the secreted. The enzyme catalyses a 1,2-diacyl-sn-glycero-3-phosphocholine + H2O = a 1-acyl-sn-glycero-3-phosphocholine + a fatty acid + H(+). Its function is as follows. Snake venom phospholipase A2 (PLA2) that displays presynaptic neurotoxicity. PLA2 catalyzes the calcium-dependent hydrolysis of the 2-acyl groups in 3-sn-phosphoglycerides. This is Basic phospholipase A2 mangshantoxin from Protobothrops mangshanensis (Mangshan pitviper).